Reading from the N-terminus, the 725-residue chain is Gamma-tubulin complex component 5 (725 aa).

Positions 222 to 246 (TENEEKMSDNASASSGSDQGPSSRQ) are disordered. The span at 232–244 (ASASSGSDQGPSS) shows a compositional bias: low complexity.

It belongs to the TUBGCP family. In terms of assembly, component of the gamma-tubulin ring complex (gTuRC) consisting of TUBGCP2, TUBGCP3, TUBGCP4, TUBGCP5 and TUBGCP6 and gamma-tubulin TUBG1 or TUBG2. TUBGCP2, TUBGCP3, TUBGCP4, TUBGCP5 and TUBGCP6 assemble in a 5:5:2:1:1 stoichiometry; each is associated with a gamma-tubulin, thereby arranging 14 gamma-tubulins in a helical manner. Gamma-tubulin at the first position is blocked by TUBGCP3 at the last position, allowing 13 protafilaments to grow into a microtubule. The gTuRC (via TUBGCP3 and TUBGCP6) interacts with ACTB and MZT1; the interactions form a luminal bridge that stabilizes the initial structure during complex assembly. The gTuRC (via TUBGCP2) interacts with MZT2A/MZT2B and CDK5RAP2 (via CM1 motif); the interactions play a role in gTuRC activation.

It localises to the cytoplasm. The protein resides in the cytoskeleton. It is found in the microtubule organizing center. Its subcellular location is the centrosome. Component of the gamma-tubulin ring complex (gTuRC) which mediates microtubule nucleation. The gTuRC regulates the minus-end nucleation of alpha-beta tubulin heterodimers that grow into microtubule protafilaments, a critical step in centrosome duplication and spindle formation. The chain is Gamma-tubulin complex component 5 (TUBGCP5) from Macaca fascicularis (Crab-eating macaque).